Reading from the N-terminus, the 141-residue chain is Putative antiporter subunit mnhB2 (141 aa).

The next 4 helical transmembrane spans lie at 10 to 30 (TVTK…FLAG), 35 to 55 (GGGF…FLAF), 70 to 90 (ILMI…MFFG), and 116 to 136 (VFEA…MLSI).

It belongs to the CPA3 antiporters (TC 2.A.63) subunit B family. As to quaternary structure, may form a heterooligomeric complex that consists of seven subunits: mnhA2, mnhB2, mnhC2, mnhD2, mnhE2, mnhF2 and mnhG2.

Its subcellular location is the cell membrane. The chain is Putative antiporter subunit mnhB2 (mnhB2) from Staphylococcus saprophyticus subsp. saprophyticus (strain ATCC 15305 / DSM 20229 / NCIMB 8711 / NCTC 7292 / S-41).